We begin with the raw amino-acid sequence, 298 residues long: Cytochrome c oxidase subunit 2 (298 aa).

The signal sequence occupies residues 1–29; sequence MMAIATKRRGVAAVMSLGVATMTAVPALA. Glutamine 30 bears the Pyrrolidone carboxylic acid mark. Topologically, residues 30–55 are periplasmic; sequence QDVLGDLPVIGKPVNGGMNFQPASSP. The chain crosses the membrane as a helical span at residues 56-88; the sequence is LAHDQQWLDHFVLYIITAVTIFVCLLLLICIVR. Residues 89 to 103 lie on the Cytoplasmic side of the membrane; the sequence is FNRRANPVPARFTHN. Residues 104 to 134 traverse the membrane as a helical segment; the sequence is TPIEVIWTLVPVLILVAIGAFSLPILFRSQE. At 135–280 the chain is on the periplasmic side; sequence MPNDPDLVIK…WLAGAKEEFA (146 aa). Positions 210, 245, 247, 249, 253, and 256 each coordinate Cu cation. Positions 281-298 are cleaved as a propeptide — C-terminal propeptide; the sequence is ADASDYLPASPVKLASAE.

The protein belongs to the cytochrome c oxidase subunit 2 family. Requires binuclear copper center (CuA) as cofactor.

It localises to the cell inner membrane. The catalysed reaction is 4 Fe(II)-[cytochrome c] + O2 + 8 H(+)(in) = 4 Fe(III)-[cytochrome c] + 2 H2O + 4 H(+)(out). Its function is as follows. Subunits I and II form the functional core of the enzyme complex. Electrons originating in cytochrome c are transferred via heme a and Cu(A) to the binuclear center formed by heme a3 and Cu(B). The polypeptide is Cytochrome c oxidase subunit 2 (ctaC) (Paracoccus denitrificans).